The chain runs to 350 residues: Biotin synthase (350 aa).

The 228-residue stretch at 42–269 (NEVQVSTLCS…QSHVRLSAGR (228 aa)) folds into the Radical SAM core domain. Residues Cys57, Cys61, and Cys64 each contribute to the [4Fe-4S] cluster site. Cys101, Cys132, Cys192, and Arg264 together coordinate [2Fe-2S] cluster.

Belongs to the radical SAM superfamily. Biotin synthase family. In terms of assembly, homodimer. [4Fe-4S] cluster serves as cofactor. The cofactor is [2Fe-2S] cluster.

The catalysed reaction is (4R,5S)-dethiobiotin + (sulfur carrier)-SH + 2 reduced [2Fe-2S]-[ferredoxin] + 2 S-adenosyl-L-methionine = (sulfur carrier)-H + biotin + 2 5'-deoxyadenosine + 2 L-methionine + 2 oxidized [2Fe-2S]-[ferredoxin]. It functions in the pathway cofactor biosynthesis; biotin biosynthesis; biotin from 7,8-diaminononanoate: step 2/2. In terms of biological role, catalyzes the conversion of dethiobiotin (DTB) to biotin by the insertion of a sulfur atom into dethiobiotin via a radical-based mechanism. This chain is Biotin synthase, found in Saccharophagus degradans (strain 2-40 / ATCC 43961 / DSM 17024).